The sequence spans 66 residues: MDWNRVEGNWKQFKGNVKEKWGKLTDDDLDVIEGRRDQLEGKLQERYGYAKDQVRKDVDDWFTTLK.

The protein belongs to the UPF0337 (CsbD) family.

The polypeptide is UPF0337 protein RPA4217 (Rhodopseudomonas palustris (strain ATCC BAA-98 / CGA009)).